Consider the following 275-residue polypeptide: Bis(5'-nucleosyl)-tetraphosphatase, symmetrical (275 aa).

The protein belongs to the Ap4A hydrolase family.

The catalysed reaction is P(1),P(4)-bis(5'-adenosyl) tetraphosphate + H2O = 2 ADP + 2 H(+). Its function is as follows. Hydrolyzes diadenosine 5',5'''-P1,P4-tetraphosphate to yield ADP. The polypeptide is Bis(5'-nucleosyl)-tetraphosphatase, symmetrical (Stutzerimonas stutzeri (strain A1501) (Pseudomonas stutzeri)).